A 368-amino-acid polypeptide reads, in one-letter code: Histidinol-phosphate aminotransferase (368 aa).

The residue at position 223 (Lys-223) is an N6-(pyridoxal phosphate)lysine.

It belongs to the class-II pyridoxal-phosphate-dependent aminotransferase family. Histidinol-phosphate aminotransferase subfamily. Homodimer. Pyridoxal 5'-phosphate serves as cofactor.

It carries out the reaction L-histidinol phosphate + 2-oxoglutarate = 3-(imidazol-4-yl)-2-oxopropyl phosphate + L-glutamate. It functions in the pathway amino-acid biosynthesis; L-histidine biosynthesis; L-histidine from 5-phospho-alpha-D-ribose 1-diphosphate: step 7/9. The chain is Histidinol-phosphate aminotransferase from Rhodospirillum rubrum (strain ATCC 11170 / ATH 1.1.1 / DSM 467 / LMG 4362 / NCIMB 8255 / S1).